The primary structure comprises 523 residues: UPF0329 protein ECU02_0050 (523 aa).

Residues 326–386 (EEKAKSKKRG…KTGKKSEGGR (61 aa)) form a disordered region. Residues 330 to 339 (KSKKRGKRKS) show a composition bias toward basic residues. Positions 344 to 353 (EAKEEEKKES) are enriched in basic and acidic residues. Over residues 354–368 (ETEEVEAGEEVEMPS) the composition is skewed to acidic residues.

This sequence belongs to the UPF0329 family.

The sequence is that of UPF0329 protein ECU02_0050 from Encephalitozoon cuniculi (strain GB-M1) (Microsporidian parasite).